We begin with the raw amino-acid sequence, 1456 residues long: Alpha-2-macroglobulin-like protein 1 (1456 aa).

The N-terminal stretch at 1–19 is a signal peptide; the sequence is MVPTILLSALLLHFTDVVA. N-linked (GlcNAc...) asparagine glycans are attached at residues Asn48, Asn172, and Asn868.

Belongs to the protease inhibitor I39 (alpha-2-macroglobulin) family. As to quaternary structure, homotetramer; consists of two dimer pairs that are disulfide-linked. Part of a complex composed of complement component C3, CLCA1/CLCA3, A2ML1/OH and ALB/serum albumin.

The protein resides in the secreted. In terms of biological role, inhibits protease gelatinolytic complex activity against type 1 collagen. The polypeptide is Alpha-2-macroglobulin-like protein 1 (Mus musculus (Mouse)).